Here is a 106-residue protein sequence, read N- to C-terminus: Nucleoid-associated protein Rpal_0620 (106 aa).

It belongs to the YbaB/EbfC family. Homodimer.

It localises to the cytoplasm. It is found in the nucleoid. Functionally, binds to DNA and alters its conformation. May be involved in regulation of gene expression, nucleoid organization and DNA protection. This chain is Nucleoid-associated protein Rpal_0620, found in Rhodopseudomonas palustris (strain TIE-1).